The chain runs to 214 residues: Leucyl/phenylalanyl-tRNA--protein transferase (214 aa).

Positions 194–214 are disordered; the sequence is FAPPGYSPDPASVVQRSSQTS.

The protein belongs to the L/F-transferase family.

It localises to the cytoplasm. It catalyses the reaction N-terminal L-lysyl-[protein] + L-leucyl-tRNA(Leu) = N-terminal L-leucyl-L-lysyl-[protein] + tRNA(Leu) + H(+). The catalysed reaction is N-terminal L-arginyl-[protein] + L-leucyl-tRNA(Leu) = N-terminal L-leucyl-L-arginyl-[protein] + tRNA(Leu) + H(+). It carries out the reaction L-phenylalanyl-tRNA(Phe) + an N-terminal L-alpha-aminoacyl-[protein] = an N-terminal L-phenylalanyl-L-alpha-aminoacyl-[protein] + tRNA(Phe). Its function is as follows. Functions in the N-end rule pathway of protein degradation where it conjugates Leu, Phe and, less efficiently, Met from aminoacyl-tRNAs to the N-termini of proteins containing an N-terminal arginine or lysine. The polypeptide is Leucyl/phenylalanyl-tRNA--protein transferase (Cereibacter sphaeroides (strain ATCC 17025 / ATH 2.4.3) (Rhodobacter sphaeroides)).